Here is a 121-residue protein sequence, read N- to C-terminus: UPF0344 protein BCE_1257 (121 aa).

4 helical membrane-spanning segments follow: residues 6–26 (ITAW…YSAG), 38–58 (LMYI…VKTA), 65–85 (WYGL…MVLV), and 92–112 (PTGA…YLGL).

The protein belongs to the UPF0344 family.

Its subcellular location is the cell membrane. The protein is UPF0344 protein BCE_1257 of Bacillus cereus (strain ATCC 10987 / NRS 248).